A 72-amino-acid polypeptide reads, in one-letter code: uncharacterized protein (72 aa).

This sequence belongs to the asfivirus I73R family.

The protein localises to the virion. This is an uncharacterized protein from Ornithodoros (relapsing fever ticks).